The sequence spans 323 residues: tRNA U34 carboxymethyltransferase (323 aa).

Residues lysine 91, tryptophan 105, lysine 110, glycine 130, 152 to 154 (DPT), 181 to 182 (IE), methionine 196, tyrosine 200, and arginine 315 contribute to the carboxy-S-adenosyl-L-methionine site.

It belongs to the class I-like SAM-binding methyltransferase superfamily. CmoB family. Homotetramer.

The catalysed reaction is carboxy-S-adenosyl-L-methionine + 5-hydroxyuridine(34) in tRNA = 5-carboxymethoxyuridine(34) in tRNA + S-adenosyl-L-homocysteine + H(+). Functionally, catalyzes carboxymethyl transfer from carboxy-S-adenosyl-L-methionine (Cx-SAM) to 5-hydroxyuridine (ho5U) to form 5-carboxymethoxyuridine (cmo5U) at position 34 in tRNAs. In Salmonella arizonae (strain ATCC BAA-731 / CDC346-86 / RSK2980), this protein is tRNA U34 carboxymethyltransferase.